Here is a 34-residue protein sequence, read N- to C-terminus: Cytochrome c oxidase polypeptide 2A (34 aa).

The residue at position 1 (Met-1) is an N-formylmethionine. Residues 4-34 (KPKGALAVILVLTLTILVFWLGVYAVFFARG) form a helical membrane-spanning segment.

Its subcellular location is the cell membrane. It carries out the reaction 4 Fe(II)-[cytochrome c] + O2 + 8 H(+)(in) = 4 Fe(III)-[cytochrome c] + 2 H2O + 4 H(+)(out). The protein is Cytochrome c oxidase polypeptide 2A (cbaD) of Thermus thermophilus (strain ATCC 27634 / DSM 579 / HB8).